Here is a 370-residue protein sequence, read N- to C-terminus: Putative glutamate--cysteine ligase 2 (370 aa).

Belongs to the glutamate--cysteine ligase type 2 family. YbdK subfamily.

It carries out the reaction L-cysteine + L-glutamate + ATP = gamma-L-glutamyl-L-cysteine + ADP + phosphate + H(+). Its function is as follows. ATP-dependent carboxylate-amine ligase which exhibits weak glutamate--cysteine ligase activity. In Methylibium petroleiphilum (strain ATCC BAA-1232 / LMG 22953 / PM1), this protein is Putative glutamate--cysteine ligase 2.